The chain runs to 297 residues: F-actin-capping protein subunit beta (297 aa).

Basic and acidic residues predominate over residues 276 to 289 (DLSGKESDDKRQSE). The interval 276-297 (DLSGKESDDKRQSELVKGLQSL) is disordered.

This sequence belongs to the F-actin-capping protein beta subunit family. Component of the F-actin capping complex, composed of a heterodimer of an alpha and a beta subunit.

It is found in the cytoplasm. The protein resides in the cytoskeleton. The protein localises to the actin patch. In terms of biological role, F-actin-capping proteins bind in a Ca(2+)-independent manner to the fast growing ends of actin filaments (barbed end) thereby blocking the exchange of subunits at these ends. Unlike other capping proteins (such as gelsolin and severin), these proteins do not sever actin filaments. This is F-actin-capping protein subunit beta (CAP2) from Debaryomyces hansenii (strain ATCC 36239 / CBS 767 / BCRC 21394 / JCM 1990 / NBRC 0083 / IGC 2968) (Yeast).